The sequence spans 480 residues: Acyl-coenzyme A synthetase ACSM6, mitochondrial (480 aa).

Residues 1 to 21 (MLGRFQPFSLVRSFRLGFEAC) constitute a mitochondrion transit peptide. Residues 226 to 234 (TKGTTGAPK), 366 to 371 (EGYGQT), aspartate 453, and arginine 468 each bind ATP.

The protein belongs to the ATP-dependent AMP-binding enzyme family. In terms of assembly, monomer. It depends on Mg(2+) as a cofactor. Requires Mn(2+) as cofactor.

It is found in the mitochondrion. The enzyme catalyses a medium-chain fatty acid + ATP + CoA = a medium-chain fatty acyl-CoA + AMP + diphosphate. Functionally, catalyzes the activation of fatty acids by CoA to produce an acyl-CoA, the first step in fatty acid metabolism. The chain is Acyl-coenzyme A synthetase ACSM6, mitochondrial (ACSM6) from Homo sapiens (Human).